The primary structure comprises 1320 residues: MQDDSIEASTSISQLLRESYLAETRHRGNNERSRAEPSSNPCHFGSPSGAAEGGGGQDDLPDLSAFLSQEELDESVNLARLAINYDPLEKADETQARKRLSPDQMKHSPNLSFEPNFCQDNPRSPTSSKESPQEAKRPQYCSETQSKKVFLNKAADFIEELSSLFKSHSSKRIRPRACKNHKSKLESQNKVMQENSSSFSDLSERRERSSVPIPIPADTRDNEVNHALEQQEAKRREAEQAASEAAGGDTTPGSSPSSLYYEEPLGQPPRFTQKLRSREVPEGTRVQLDCIVVGIPPPQVRWYCEGKELENSPDIHIVQAGNLHSLTIAEAFEEDTGRYSCFASNIYGTDSTSAEIYIEGVSSSDSEGDPNKEEMNRIQKPNEVSSPPTTSAVIPPAVPQAQHLVAQPRVATIQQCQSPTNYLQGLDGKPIIAAPVFTKMLQNLSASEGQLVVFECRVKGAPSPKVEWYREGTLIEDSPDFRILQKKPRSMAEPEEICTLVIAEVFAEDSGCFTCTASNKYGTVSSIAQLHVRGNEDLSNNGSLHSANSTTNLAAIEPQPSPPHSEPPSVEQPPKPKLEGVLVNHNEPRSSSRIGLRVHFNLPEDDKGSEASSEAGVVTTRQTRPDSFQERFNGQATKTPEPSSPVKEPPPVLAKPKLDSTQLQQLHNQVLLEQHQLQNPPPSSPKEFPFSMTVLNSNAPPAVTTSSKQVKAPSSQTFSLARPKYFFPSTNTTAATVAPSSSPVFTLSSTPQTIQRTVSKESLLVSHPSVQTKSPGGLSIQNEPLPPGPTEPTPPPFTFSIPSGNQFQPRCVSPIPVSPTSRIQNPVAFLSSVLPSLPAIPPTNAMGLPRSAPSMPSQGLAKKNTKSPQPVNDDNIRETKNAVIRDLGKKITFSDVRPNQQEYKISSFEQRLMNEIEFRLERTPVDESDDEIQHDEIPTGKCIAPIFDKRLKHFRVTEGSPVTFTCKIVGIPVPKVYWFKDGKQISKRNEHCKMRREGDGTCSLHIESTTSDDDGNYTIMAANPQGRISCSGHLMVQSLPIRSRLTSAGQSHRGRSRVQERDKEPLQERFFRPHFLQAPGDMVAHEGRLCRLDCKVSGLPPPELTWLLNGQPVLPDASHKMLVRETGVHSLLIDPLTQRDAGTYKCIATNKTGQNSFSLELSVVAKEVKKAPVILEKLQNCGVPEGHPVRLECRVIGMPPPVFYWKKDNETIPCTRERISMHQDTTGYACLLIQPAKKSDAGWYTLSAKNEAGIVSCTARLDIYAQWHHQIPPPMSVRPSGSRYGSLTSKGLDIFSAFSSMESTMVYSCSSRSVVESDEL.

Residues 1-522 (MQDDSIEAST…FTCTASNKYG (522 aa)) are interaction with CARP. Disordered regions lie at residues 19-68 (SYLA…AFLS), 84-145 (NYDP…SETQ), and 165-271 (FKSH…PPRF). 2 stretches are compositionally biased toward basic and acidic residues: residues 23 to 35 (ETRH…RSRA) and 87 to 106 (PLEK…DQMK). Position 101 is a phosphoserine (serine 101). A compositionally biased stretch (polar residues) spans 107 to 130 (HSPNLSFEPNFCQDNPRSPTSSKE). Residue serine 131 is modified to Phosphoserine. Residues 168-182 (HSSKRIRPRACKNHK) show a composition bias toward basic residues. Positions 186 to 201 (ESQNKVMQENSSSFSD) are enriched in polar residues. Basic and acidic residues predominate over residues 218–239 (DTRDNEVNHALEQQEAKRREAE). Positions 219–248 (TRDNEVNHALEQQEAKRREAEQAASEAAGG) form a coiled coil. Over residues 240–258 (QAASEAAGGDTTPGSSPSS) the composition is skewed to low complexity. Threonine 251 carries the post-translational modification Phosphothreonine. Ig-like domains lie at 269–359 (PRFT…IYIE) and 435–531 (PVFT…AQLH). 2 cysteine pairs are disulfide-bonded: cysteine 290-cysteine 341 and cysteine 456-cysteine 515. The segment at 554–655 (AAIEPQPSPP…VKEPPPVLAK (102 aa)) is disordered. Over residues 559–575 (QPSPPHSEPPSVEQPPK) the composition is skewed to pro residues. The residue at position 644 (serine 644) is a Phosphoserine. Residues 649 to 677 (PPPVLAKPKLDSTQLQQLHNQVLLEQHQL) form an interaction with NEB region. Phosphoserine is present on serine 759. Residues 763 to 805 (LLVSHPSVQTKSPGGLSIQNEPLPPGPTEPTPPPFTFSIPSGN) are disordered. The segment covering 768–782 (PSVQTKSPGGLSIQN) has biased composition (polar residues). The segment covering 784 to 797 (PLPPGPTEPTPPPF) has biased composition (pro residues). Phosphoserine occurs at positions 813, 818, 867, 907, and 928. Positions 844-876 (NAMGLPRSAPSMPSQGLAKKNTKSPQPVNDDNI) are disordered. 3 consecutive Ig-like domains span residues 945–1029 (PIFD…GRIS), 1073–1162 (PHFL…LELS), and 1172–1262 (PVIL…ARLD). Positions 945–1320 (PIFDKRLKHF…SRSVVESDEL (376 aa)) are interaction with ACTN. Cysteine 1094 and cysteine 1146 are disulfide-bonded.

Belongs to the myotilin/palladin family. As to quaternary structure, interacts with TTN/titin, NEB, NEBL, ACTN2 and CARP. As to expression, expressed in adult skeletal muscle and fetal heart.

The protein resides in the cytoplasm. It localises to the nucleus. Its subcellular location is the myofibril. The protein localises to the sarcomere. It is found in the z line. In terms of biological role, component of the sarcomere that tethers together nebulin (skeletal muscle) and nebulette (cardiac muscle) to alpha-actinin, at the Z lines. This Homo sapiens (Human) protein is Myopalladin (MYPN).